Reading from the N-terminus, the 192-residue chain is UPF0301 protein BMA10247_1859 (192 aa).

It belongs to the UPF0301 (AlgH) family.

The polypeptide is UPF0301 protein BMA10247_1859 (Burkholderia mallei (strain NCTC 10247)).